A 223-amino-acid chain; its full sequence is RNA-free ribonuclease P (223 aa).

Belongs to the HARP family.

The enzyme catalyses Endonucleolytic cleavage of RNA, removing 5'-extranucleotides from tRNA precursor.. RNA-free RNase P that catalyzes the removal of the 5'-leader sequence from pre-tRNA to produce the mature 5'-terminus. This is RNA-free ribonuclease P from Methanococcus maripaludis (strain DSM 14266 / JCM 13030 / NBRC 101832 / S2 / LL).